The following is a 99-amino-acid chain: Large ribosomal subunit protein bL28 (99 aa).

This sequence belongs to the bacterial ribosomal protein bL28 family.

The chain is Large ribosomal subunit protein bL28 from Caulobacter vibrioides (strain ATCC 19089 / CIP 103742 / CB 15) (Caulobacter crescentus).